We begin with the raw amino-acid sequence, 347 residues long: Melatonin receptor type 1B-B (347 aa).

The Extracellular portion of the chain corresponds to 1–36 (MPENIAFLTNSTDLGHVGRALGSSARPAWAIAVLAS). Asn10 is a glycosylation site (N-linked (GlcNAc...) asparagine). A helical membrane pass occupies residues 37 to 57 (VLIFTTVVDVLGNLLVIISVF). At 58–72 (RNRKLRNAGNVFVVS) the chain is on the cytoplasmic side. Residues 73–93 (LAFADLVVAFYPYPLVLYAIF) form a helical membrane-spanning segment. Residues 94–105 (HDGWSLGETQCK) lie on the Extracellular side of the membrane. Cys104 and Cys181 are oxidised to a cystine. The chain crosses the membrane as a helical span at residues 106-126 (ISGFLMGLSVIGSVFNITGIA). Residues 127-148 (INRYCYICHSFAYGRLYSFRNT) are Cytoplasmic-facing. A helical membrane pass occupies residues 149-169 (LLLVALIWALTVLAILPNFFV). Topologically, residues 170–191 (GSLSYDPRVYSCTFTQTASSSY) are extracellular. The helical transmembrane segment at 192-212 (TVVVVVVHFLVPIAVVTFCYL) threads the bilayer. Over 213–244 (RIWVLVIQVRRKVKSEERSRVRPSDLRNFVTM) the chain is Cytoplasmic. The chain crosses the membrane as a helical span at residues 245 to 265 (FVVFVLFAICWAPLNLIGLVV). At 266-278 (AINPEVMAPRVPE) the chain is on the extracellular side. Residues 279–299 (WLFVVSYFMAYFNSCLNAIIY) form a helical membrane-spanning segment. Residues 300–347 (GLLNRNFRKEYVRIMTAVWIPRRFVTETSRAATDGMRSKPSPAINNNE) lie on the Cytoplasmic side of the membrane.

This sequence belongs to the G-protein coupled receptor 1 family.

The protein localises to the cell membrane. High affinity receptor for melatonin. The activity of this receptor is mediated by pertussis toxin sensitive G proteins that inhibits adenylate cyclase activity. The sequence is that of Melatonin receptor type 1B-B (mtnr1bb) from Danio rerio (Zebrafish).